The following is a 211-amino-acid chain: MAVLSLLLLGGLWSAVGASNMAVVTCGSVVKLLNTRHNVRLHSHDVRYGSGSGQQSVTGVTSVDDSNSYWRIRGKTATVCERGTPIKCGQPIRLTHINTGRNLHSHHFTSPLSGNQEVSAFGEEGEGDYLDDWTVLCNGPYWVRDGEVRFKHSSTDVLLSVTGEQYGRPISGQKEVHGMAQPSQNNYWKAMEGIFMKPSELLRAEVHHAEL.

Positions 1–18 (MAVLSLLLLGGLWSAVGA) are cleaved as a signal peptide. MIR domains follow at residues 21-75 (MAVV…IRGK), 83-138 (GTPI…VLCN), and 139-193 (GPYW…AMEG).

Ubiquitously expressed with highest expression in liver and kidney.

The protein localises to the secreted. The sequence is that of Stromal cell-derived factor 2 (Sdf2) from Mus musculus (Mouse).